Consider the following 514-residue polypeptide: ATP synthase subunit alpha (514 aa).

Position 170–177 (170–177) interacts with ATP; sequence GDRQIGKT.

It belongs to the ATPase alpha/beta chains family. As to quaternary structure, F-type ATPases have 2 components, CF(1) - the catalytic core - and CF(0) - the membrane proton channel. CF(1) has five subunits: alpha(3), beta(3), gamma(1), delta(1), epsilon(1). CF(0) has three main subunits: a(1), b(2) and c(9-12). The alpha and beta chains form an alternating ring which encloses part of the gamma chain. CF(1) is attached to CF(0) by a central stalk formed by the gamma and epsilon chains, while a peripheral stalk is formed by the delta and b chains.

It localises to the cell inner membrane. The catalysed reaction is ATP + H2O + 4 H(+)(in) = ADP + phosphate + 5 H(+)(out). In terms of biological role, produces ATP from ADP in the presence of a proton gradient across the membrane. The alpha chain is a regulatory subunit. The chain is ATP synthase subunit alpha from Pseudomonas putida (strain W619).